Consider the following 481-residue polypeptide: Lincomycin resistance protein (481 aa).

The next 14 helical transmembrane spans lie at 30-50 (WVTL…VTVV), 67-87 (QLTW…MVGG), 99-119 (LLFG…APNL), 127-147 (FGQG…IACS), 162-182 (VASV…QLFS), 185-205 (WIFL…LLLV), 215-235 (PVDL…IFGV), 245-265 (LPLA…FVAV), 285-305 (LVAN…FFLL), 318-338 (IEAG…CVLV), 340-360 (GLIE…LAGP), 374-394 (LLTS…GLVA), 421-441 (LGGA…HLGG), and 446-466 (FTVA…AVLA).

The protein belongs to the major facilitator superfamily. TCR/Tet family.

It is found in the cell membrane. Functionally, proton-dependent transporter. May mediate the efflux of lincomycin. This chain is Lincomycin resistance protein (lmrA), found in Streptomyces lincolnensis.